A 1297-amino-acid polypeptide reads, in one-letter code: DNA-directed RNA polymerase subunit beta'' (1297 aa).

Positions 220, 293, 300, and 303 each coordinate Zn(2+). The span at 1278-1288 (RRRKQNTKTRK) shows a compositional bias: basic residues. Residues 1278 to 1297 (RRRKQNTKTRKNNLFSLNEK) are disordered.

It belongs to the RNA polymerase beta' chain family. RpoC2 subfamily. In terms of assembly, in plastids the minimal PEP RNA polymerase catalytic core is composed of four subunits: alpha, beta, beta', and beta''. When a (nuclear-encoded) sigma factor is associated with the core the holoenzyme is formed, which can initiate transcription. Zn(2+) serves as cofactor.

The protein localises to the plastid. The protein resides in the chloroplast. The enzyme catalyses RNA(n) + a ribonucleoside 5'-triphosphate = RNA(n+1) + diphosphate. Its function is as follows. DNA-dependent RNA polymerase catalyzes the transcription of DNA into RNA using the four ribonucleoside triphosphates as substrates. This chain is DNA-directed RNA polymerase subunit beta'', found in Welwitschia mirabilis (Tree tumbo).